Here is a 537-residue protein sequence, read N- to C-terminus: Putative cysteine ligase BshC (537 aa).

A coiled-coil region spans residues Ile-422 to Ile-450.

The protein belongs to the BshC family.

In terms of biological role, involved in bacillithiol (BSH) biosynthesis. May catalyze the last step of the pathway, the addition of cysteine to glucosamine malate (GlcN-Mal) to generate BSH. The protein is Putative cysteine ligase BshC of Staphylococcus aureus (strain MRSA252).